Here is a 539-residue protein sequence, read N- to C-terminus: Phosphoenolpyruvate carboxykinase (ATP) (539 aa).

Residues Arg64, Tyr206, and Lys212 each contribute to the substrate site. Residues Lys212, His231, and 247-255 (GLSGTGKTT) contribute to the ATP site. Mn(2+) is bound by residues Lys212 and His231. Residue Asp268 participates in Mn(2+) binding. ATP-binding positions include Glu296, Arg332, 448–449 (RI), and Thr454. Position 332 (Arg332) interacts with substrate.

Belongs to the phosphoenolpyruvate carboxykinase (ATP) family. In terms of assembly, monomer. It depends on Mn(2+) as a cofactor.

Its subcellular location is the cytoplasm. It catalyses the reaction oxaloacetate + ATP = phosphoenolpyruvate + ADP + CO2. Its pathway is carbohydrate biosynthesis; gluconeogenesis. Involved in the gluconeogenesis. Catalyzes the conversion of oxaloacetate (OAA) to phosphoenolpyruvate (PEP) through direct phosphoryl transfer between the nucleoside triphosphate and OAA. This Erwinia tasmaniensis (strain DSM 17950 / CFBP 7177 / CIP 109463 / NCPPB 4357 / Et1/99) protein is Phosphoenolpyruvate carboxykinase (ATP).